The following is an 811-amino-acid chain: TLR4 interactor with leucine rich repeats (811 aa).

Residues 1-25 (MEGVGAVRFWLVVCGCLAFPPRAES) form the signal peptide. One can recognise an LRRNT domain in the interval 26–57 (VCPERCDCQHPQHLLCTNRGLRAVPKTSSLPS). The Extracellular portion of the chain corresponds to 26 to 696 (VCPERCDCQH…AGGRGGVDYQ (671 aa)). LRR repeat units lie at residues 61 to 81 (VLTY…DFHR), 84 to 105 (QLRR…TFEK), 108 to 129 (RLEE…TLAP), 132 to 153 (KLRI…SFEG), 156 to 177 (SLVK…VFAP), 180 to 201 (NLLY…AFTQ), 204 to 223 (KLRF…RHAA), 230 to 251 (SLST…VFQH), 254 to 275 (RLGL…AFWG), 278 to 298 (ALRE…TLLE), 302 to 323 (SLEA…TFGH), and 326 to 347 (RLRE…IFAA). Asparagine 73 carries an N-linked (GlcNAc...) asparagine glycan. Residues 359–416 (NGWTCDCRLRGLKRWMGNWHSQGRLLTVFVQCRHPPALRGKYLDYLDDQLLQNGSCVD) form the LRRCT domain. A glycan (N-linked (GlcNAc...) asparagine) is linked at asparagine 411. Disordered regions lie at residues 414–460 (CVDP…QQRG) and 486–562 (RRGP…QQGR). Over residues 421–430 (PTAGSRQWPI) the composition is skewed to polar residues. Low complexity-rich tracts occupy residues 440 to 460 (PPAG…QQRG) and 494 to 508 (QSPS…APQS). Basic and acidic residues predominate over residues 510 to 519 (DLHEKPERGR). Polar residues predominate over residues 524–545 (NLPQTEPTPTSEPASGTPSARD). Asparagine 589 carries N-linked (GlcNAc...) asparagine glycosylation. The chain crosses the membrane as a helical span at residues 697-717 (LLTLVLLAINALLVLLALAAW). Residues 718–809 (GSRWLRRKLR…RREDHLLQRF (92 aa)) lie on the Cytoplasmic side of the membrane. Residue serine 798 is modified to Phosphoserine.

As to quaternary structure, belongs to the lipopolysaccharide (LPS) receptor, a multi-protein complex containing at least CD14, MD-2 and TLR4. Interacts with TLR4; this interaction is greatly enhanced following LPS stimulation. Interacts with LPS. Post-translationally, N-glycolysaled. Highly expressed in cortical astrocytes and in cerebellar granule neurons.

Its subcellular location is the membrane. Its function is as follows. Component of the TLR4 signaling complex. Mediates the innate immune response to bacterial lipopolysaccharide (LPS) leading to cytokine secretion and the inflammatory response. In Rattus norvegicus (Rat), this protein is TLR4 interactor with leucine rich repeats (Tril).